We begin with the raw amino-acid sequence, 339 residues long: UDP-N-acetylglucosamine/UDP-N-acetylgalactosamine transporter nstp-4 (339 aa).

8 helical membrane-spanning segments follow: residues 44–64, 94–114, 148–168, 186–206, 224–244, 255–275, 281–301, and 305–325; these read LSSTAVVCAEIIKLITCFFVI, LKVAVPAIMYVIQNNLLFFAL, YNWMALILLTAGVALVQYPSG, ILGLGAVLAACFSSGFAGVYF, LAFFSVFGALLVCWLYDWQAI, GVIWIVVLLQAYGGLVIALVV, ILKGFAVSLSIILSSFTSWLV, and LTITTTFAIGATVVIFATFLY.

This sequence belongs to the nucleotide-sugar transporter family. SLC35A subfamily. In terms of tissue distribution, widely expressed, including in pharynx and pharyngeal gland cells, seam cells, spermatheca, stomatointestinal muscle, vulva, and body wall muscle.

It is found in the golgi apparatus membrane. Uridine diphosphate-N-acetylglucosamine (UDP-GlcNAc) transporter in the Golgi apparatus. UDP-N-acetylgalactosamine (UDP-GalNAc) transporter in the Golgi apparatus. Apparently transports UDP-GlcNAc and UDP-GalNAc simultaneously, and independently, by an unknown mechanism. Functions redundantly with nucleotide sugar transporter srf-3. May be involved in gonadal development. This Caenorhabditis elegans protein is UDP-N-acetylglucosamine/UDP-N-acetylgalactosamine transporter nstp-4.